Consider the following 334-residue polypeptide: MNTEATHDQNEAQTTGVRLRNAREQLGLSQQAVAERLCLKVSTVRDIEEDKAPSDLASTFLRGYIRSYARLVHVPEEELLPGLEKQAPLRAAKVAPMQSFSLGKRRKKRDGWLMSFTWLVLFVVVGLTGAWWWQNHKAQQEEITTMADQSTAELNADKDSGQSVPLDTGAVTSQDTTPAQTAPAPATPVDSTAATQTPAPTAAATQNTVVAPSQANVDTAATSAAPAATETPSALPTSQAGVAAPAADPNALVMNFTADCWLEVTDATGKKLFSGMQRKDGNLNLTGQAPYKLKIGAPAAVQIQYQGKPVDLSRFIRTNQVARLTLNAEPTPAQ.

The Cytoplasmic segment spans residues 1 to 111; it reads MNTEATHDQN…LGKRRKKRDG (111 aa). Residues 19–71 form the HTH cro/C1-type domain; it reads LRNAREQLGLSQQAVAERLCLKVSTVRDIEEDKAPSDLASTFLRGYIRSYARL. The segment at residues 30 to 49 is a DNA-binding region (H-T-H motif); it reads QQAVAERLCLKVSTVRDIEE. A helical; Signal-anchor for type II membrane protein membrane pass occupies residues 112–132; the sequence is WLMSFTWLVLFVVVGLTGAWW. Residues 133–334 are Periplasmic-facing; sequence WQNHKAQQEE…TLNAEPTPAQ (202 aa). The interval 155–241 is disordered; that stretch reads NADKDSGQSV…PSALPTSQAG (87 aa). Polar residues predominate over residues 161-175; it reads GQSVPLDTGAVTSQD. 2 stretches are compositionally biased toward low complexity: residues 176–211 and 219–241; these read TTPA…TVVA and TAAT…SQAG.

The protein belongs to the RodZ family.

It localises to the cell inner membrane. Cytoskeletal protein that is involved in cell-shape control through regulation of the length of the long axis. The chain is Cytoskeleton protein RodZ from Salmonella dublin (strain CT_02021853).